A 177-amino-acid polypeptide reads, in one-letter code: Large ribosomal subunit protein uL6 (177 aa).

It belongs to the universal ribosomal protein uL6 family. In terms of assembly, part of the 50S ribosomal subunit.

Its function is as follows. This protein binds to the 23S rRNA, and is important in its secondary structure. It is located near the subunit interface in the base of the L7/L12 stalk, and near the tRNA binding site of the peptidyltransferase center. The protein is Large ribosomal subunit protein uL6 of Klebsiella pneumoniae subsp. pneumoniae (strain ATCC 700721 / MGH 78578).